The sequence spans 724 residues: NAD(+) hydrolase SARM1 (724 aa).

The N-terminal 27 residues, 1–27, are a transit peptide targeting the mitochondrion; it reads MVLTLLLSAYKLCRFFAMSGPRPGAER. The ARM 1 repeat unit spans residues 60-100; that stretch reads EVQDALERALPELQQALSALKQAGGARAVGAGLAEVFQLVE. NAD(+) contacts are provided by residues tryptophan 103, arginine 110, 149 to 157, and 190 to 193; these read EQILVAENR and HMFK. ARM repeat units follow at residues 114-153, 155-193, 196-235, 237-280, 281-314, 315-354, and 359-402; these read QGLC…QILV, ENRD…HMFK, EETC…NCAL, GGQA…LATN, KEVE…CLVD, ASDT…AEAA, and QGKT…EEVP. 2 SAM domains span residues 412–476 and 486–548; these read WKEA…LKTF and NLAD…MLHS. Phosphoserine occurs at positions 548 and 558. One can recognise a TIR domain in the interval 560–703; it reads DTPDVFISYR…KIIRFLQGRS (144 aa). Residues 569-570 and glutamate 599 each bind NAD(+); that span reads RR. Glutamate 642 is a catalytic residue. Residues 704–724 form a disordered region; sequence SRDSSAGSDTSLEGAAPMGPT.

The protein belongs to the SARM1 family. As to quaternary structure, homooctamer; forms an octameric ring via SAM domains. Interacts with TICAM1/TRIF and thereby interferes with TICAM1/TRIF function. Interacts with MAPK10/JNK3 and SDC2 (via cytoplasmic domain). In terms of processing, phosphorylation at Ser-548 by JNK kinases (MAPK8, MAPK9 and /or MAPK10) enhance the NAD(+) hydrolase (NADase) activity. Phosphorylation at Ser-548 and subsequent activation takes place in response to oxidative stress conditions and inhibits mitochondrial respiration. Predominantly expressed in brain, kidney and liver. Expressed at lower level in placenta.

The protein resides in the cytoplasm. The protein localises to the cell projection. Its subcellular location is the axon. It localises to the dendrite. It is found in the synapse. The protein resides in the mitochondrion. It carries out the reaction NAD(+) + H2O = ADP-D-ribose + nicotinamide + H(+). The catalysed reaction is NAD(+) = cyclic ADP-beta-D-ribose + nicotinamide + H(+). The enzyme catalyses NADP(+) + H2O = ADP-D-ribose 2'-phosphate + nicotinamide + H(+). With respect to regulation, autoinhibited: in the inactive state, the enzymatic TIR domain is held apart by the autoinhibiting ARM repeats. NAD(+)-binding to ARM repeats maintains an inactive state by promoting interaction between ARM repeats and the TIR domain, thereby facilitating inhibition of the enzymatic TIR domain. Following activation, possibly by nicotinamide mononucleotide (NMN), auto-inhibitory interactions are released, allowing self-association of the TIR domains and subsequent activation of the NAD(+) hydrolase (NADase) activity. Self-association of TIR domains is facilitated by the octamer of SAM domains. NAD(+) hydrolase activity is inhibited by nicotinamide. Specifically inhibited by berberine chloride and zinc chloride. In terms of biological role, NAD(+) hydrolase, which plays a key role in axonal degeneration following injury by regulating NAD(+) metabolism. Acts as a negative regulator of MYD88- and TRIF-dependent toll-like receptor signaling pathway by promoting Wallerian degeneration, an injury-induced form of programmed subcellular death which involves degeneration of an axon distal to the injury site. Wallerian degeneration is triggered by NAD(+) depletion: in response to injury, SARM1 is activated and catalyzes cleavage of NAD(+) into ADP-D-ribose (ADPR), cyclic ADPR (cADPR) and nicotinamide; NAD(+) cleavage promoting cytoskeletal degradation and axon destruction. Also able to hydrolyze NADP(+), but not other NAD(+)-related molecules. Can activate neuronal cell death in response to stress. Regulates dendritic arborization through the MAPK4-JNK pathway. Involved in innate immune response: inhibits both TICAM1/TRIF- and MYD88-dependent activation of JUN/AP-1, TRIF-dependent activation of NF-kappa-B and IRF3, and the phosphorylation of MAPK14/p38. In Homo sapiens (Human), this protein is NAD(+) hydrolase SARM1.